A 77-amino-acid polypeptide reads, in one-letter code: Large ribosomal subunit protein bL28 (77 aa).

The tract at residues 1–25 (MARVCQVTGKAPMSGNNVSHANNKT) is disordered.

Belongs to the bacterial ribosomal protein bL28 family.

The polypeptide is Large ribosomal subunit protein bL28 (Paraburkholderia xenovorans (strain LB400)).